We begin with the raw amino-acid sequence, 436 residues long: Methylenetetrahydrofolate--tRNA-(uracil-5-)-methyltransferase TrmFO (436 aa).

Position 9–14 (9–14 (GAGLAG)) interacts with FAD.

This sequence belongs to the MnmG family. TrmFO subfamily. It depends on FAD as a cofactor.

It is found in the cytoplasm. It catalyses the reaction uridine(54) in tRNA + (6R)-5,10-methylene-5,6,7,8-tetrahydrofolate + NADH + H(+) = 5-methyluridine(54) in tRNA + (6S)-5,6,7,8-tetrahydrofolate + NAD(+). It carries out the reaction uridine(54) in tRNA + (6R)-5,10-methylene-5,6,7,8-tetrahydrofolate + NADPH + H(+) = 5-methyluridine(54) in tRNA + (6S)-5,6,7,8-tetrahydrofolate + NADP(+). In terms of biological role, catalyzes the folate-dependent formation of 5-methyl-uridine at position 54 (M-5-U54) in all tRNAs. This is Methylenetetrahydrofolate--tRNA-(uracil-5-)-methyltransferase TrmFO from Acetivibrio thermocellus (strain ATCC 27405 / DSM 1237 / JCM 9322 / NBRC 103400 / NCIMB 10682 / NRRL B-4536 / VPI 7372) (Clostridium thermocellum).